The sequence spans 79 residues: Small ribosomal subunit protein bS18 (79 aa).

It belongs to the bacterial ribosomal protein bS18 family. Part of the 30S ribosomal subunit. Forms a tight heterodimer with protein bS6.

Binds as a heterodimer with protein bS6 to the central domain of the 16S rRNA, where it helps stabilize the platform of the 30S subunit. The polypeptide is Small ribosomal subunit protein bS18 (Bradyrhizobium diazoefficiens (strain JCM 10833 / BCRC 13528 / IAM 13628 / NBRC 14792 / USDA 110)).